The sequence spans 460 residues: Glutamate--tRNA ligase 2 (460 aa).

Positions 8 to 18 (PSPTGFLHVGG) match the 'HIGH' region motif. The short motif at 237–241 (KLSKR) is the 'KMSKS' region element. ATP is bound at residue K240.

It belongs to the class-I aminoacyl-tRNA synthetase family. Glutamate--tRNA ligase type 1 subfamily. Monomer.

It localises to the cytoplasm. It carries out the reaction tRNA(Glu) + L-glutamate + ATP = L-glutamyl-tRNA(Glu) + AMP + diphosphate. Catalyzes the attachment of glutamate to tRNA(Glu) in a two-step reaction: glutamate is first activated by ATP to form Glu-AMP and then transferred to the acceptor end of tRNA(Glu). This Campylobacter fetus subsp. fetus (strain 82-40) protein is Glutamate--tRNA ligase 2.